The chain runs to 125 residues: Fluoride-specific ion channel FluC (125 aa).

4 helical membrane passes run 1–21 (MIQA…RYYV), 32–52 (AFPW…GVFA), 68–88 (LLIT…LDAI), and 101–121 (IYIA…LAVM). The Na(+) site is built by glycine 75 and threonine 78.

Belongs to the fluoride channel Fluc/FEX (TC 1.A.43) family.

It localises to the cell inner membrane. It catalyses the reaction fluoride(in) = fluoride(out). Na(+) is not transported, but it plays an essential structural role and its presence is essential for fluoride channel function. Its function is as follows. Fluoride-specific ion channel. Important for reducing fluoride concentration in the cell, thus reducing its toxicity. The protein is Fluoride-specific ion channel FluC of Rhizobium johnstonii (strain DSM 114642 / LMG 32736 / 3841) (Rhizobium leguminosarum bv. viciae).